The following is a 208-amino-acid chain: Glycerol-3-phosphate acyltransferase (208 aa).

Helical transmembrane passes span 3 to 23 (IIIM…VIIG), 55 to 75 (IVMV…TLLF), 81 to 101 (YTLL…YIGF), 113 to 133 (ILLA…LLLV), and 155 to 175 (IFYY…LFIF).

This sequence belongs to the PlsY family. As to quaternary structure, probably interacts with PlsX.

It localises to the cell membrane. It carries out the reaction an acyl phosphate + sn-glycerol 3-phosphate = a 1-acyl-sn-glycero-3-phosphate + phosphate. It participates in lipid metabolism; phospholipid metabolism. Functionally, catalyzes the transfer of an acyl group from acyl-phosphate (acyl-PO(4)) to glycerol-3-phosphate (G3P) to form lysophosphatidic acid (LPA). This enzyme utilizes acyl-phosphate as fatty acyl donor, but not acyl-CoA or acyl-ACP. The chain is Glycerol-3-phosphate acyltransferase from Lactiplantibacillus plantarum (strain ATCC BAA-793 / NCIMB 8826 / WCFS1) (Lactobacillus plantarum).